A 139-amino-acid polypeptide reads, in one-letter code: Transcription antitermination protein NusB (139 aa).

Belongs to the NusB family.

Functionally, involved in transcription antitermination. Required for transcription of ribosomal RNA (rRNA) genes. Binds specifically to the boxA antiterminator sequence of the ribosomal RNA (rrn) operons. The protein is Transcription antitermination protein NusB of Natranaerobius thermophilus (strain ATCC BAA-1301 / DSM 18059 / JW/NM-WN-LF).